We begin with the raw amino-acid sequence, 474 residues long: Probable protein phosphatase 2C 37 (474 aa).

Positions methionine 1 to alanine 90 are disordered. Low complexity predominate over residues leucine 57–cysteine 77. A PPM-type phosphatase domain is found at alanine 113–leucine 470. Mn(2+) is bound by residues aspartate 152, glycine 153, and aspartate 387. The interval leucine 406–alanine 434 is disordered. Residues serine 420–alanine 434 are compositionally biased toward low complexity. Residue aspartate 461 participates in Mn(2+) binding.

This sequence belongs to the PP2C family. Requires Mg(2+) as cofactor. It depends on Mn(2+) as a cofactor.

The catalysed reaction is O-phospho-L-seryl-[protein] + H2O = L-seryl-[protein] + phosphate. It carries out the reaction O-phospho-L-threonyl-[protein] + H2O = L-threonyl-[protein] + phosphate. This chain is Probable protein phosphatase 2C 37, found in Oryza sativa subsp. japonica (Rice).